Reading from the N-terminus, the 274-residue chain is Formamidopyrimidine-DNA glycosylase (274 aa).

Pro-2 serves as the catalytic Schiff-base intermediate with DNA. Glu-3 (proton donor) is an active-site residue. The active-site Proton donor; for beta-elimination activity is the Lys-57. DNA-binding residues include His-90, Arg-109, and Lys-150. An FPG-type zinc finger spans residues 235–269; it reads FVYGRKDKACLICGHTIESIKQGQRSTFFCRHCQH. Arg-259 acts as the Proton donor; for delta-elimination activity in catalysis.

This sequence belongs to the FPG family. Monomer. It depends on Zn(2+) as a cofactor.

It carries out the reaction Hydrolysis of DNA containing ring-opened 7-methylguanine residues, releasing 2,6-diamino-4-hydroxy-5-(N-methyl)formamidopyrimidine.. It catalyses the reaction 2'-deoxyribonucleotide-(2'-deoxyribose 5'-phosphate)-2'-deoxyribonucleotide-DNA = a 3'-end 2'-deoxyribonucleotide-(2,3-dehydro-2,3-deoxyribose 5'-phosphate)-DNA + a 5'-end 5'-phospho-2'-deoxyribonucleoside-DNA + H(+). Involved in base excision repair of DNA damaged by oxidation or by mutagenic agents. Acts as a DNA glycosylase that recognizes and removes damaged bases. Has a preference for oxidized purines, such as 7,8-dihydro-8-oxoguanine (8-oxoG). Has AP (apurinic/apyrimidinic) lyase activity and introduces nicks in the DNA strand. Cleaves the DNA backbone by beta-delta elimination to generate a single-strand break at the site of the removed base with both 3'- and 5'-phosphates. This chain is Formamidopyrimidine-DNA glycosylase, found in Proteus mirabilis (strain HI4320).